The chain runs to 839 residues: Autophagy-related protein 9A (839 aa).

Residues 1–20 form a disordered region; the sequence is MAQFDTEYQRLEASYSDSPP. Ala-2 carries the post-translational modification N-acetylalanine. Topologically, residues 2–61 are cytoplasmic; that stretch reads AQFDTEYQRLEASYSDSPPGEEDLLVHVAEGSKSPWHHIENLDLFFSRVYNLHQKNGFTC. Residues 8 to 11 carry the Tyrosine-based sorting signal motif; it reads YQRL. 3 positions are modified to phosphoserine: Ser-14, Ser-16, and Ser-18. Residues 62–84 form a helical membrane-spanning segment; it reads MLIGEIFELMQFLFVVAFTTFLV. The Lumenal portion of the chain corresponds to 85-128; sequence SCVDYDILFANKMVNHSLHPTEPVKVTLPDAFLPAQVCSARIQE. Asn-99 is a glycosylation site (N-linked (GlcNAc...) asparagine). A helical membrane pass occupies residues 129–154; sequence NGSLITILVIAGVFWIHRLIKFIYNI. Over 155–290 the chain is Cytoplasmic; the sequence is CCYWEIHSFY…ELAQRLSNRI (136 aa). An intramembrane segment occupies 291–301; that stretch reads LWIGIANFLLC. Over 302–319 the chain is Cytoplasmic; that stretch reads PLILIWQILYAFFSYAEV. The stretch at 320–328 is an intramembrane region; it reads LKREPGALG. Residues 329 to 371 lie on the Cytoplasmic side of the membrane; it reads ARCWSLYGRCYLRHFNELEHELQSRLNRGYKPASKYMNCFLSP. Residues 372-397 form a helical membrane-spanning segment; that stretch reads LLTLLAKNGAFFAGSILAVLIALTIY. The Lumenal portion of the chain corresponds to 398 to 406; it reads DEDVLAVEH. The helical transmembrane segment at 407-424 threads the bilayer; it reads VLTTVTLLGVTVTVCRSF. Topologically, residues 425 to 470 are cytoplasmic; the sequence is IPDQHMVFCPEQLLRVILAHIHYMPDHWQGNAHRSQTRDEFAQLFQ. Residues 471–480 lie within the membrane without spanning it; it reads YKAVFILEEL. The Cytoplasmic segment spans residues 481 to 483; the sequence is LSP. An intramembrane segment occupies 484 to 492; sequence IVTPLILIF. The Cytoplasmic segment spans residues 493–839; sequence CLRPRALEII…DELPPQVHKV (347 aa). Ser-656, Ser-735, Ser-738, Ser-741, and Ser-828 each carry phosphoserine. Disordered regions lie at residues 656–686 and 719–839; these read SPLQPGQAPTGRAHSTMTGSGVDARTASSGS and QQAQ…VHKV. Residues 724–736 show a composition bias toward basic and acidic residues; that stretch reads EPERHLWHRRESD. 2 stretches are compositionally biased toward acidic residues: residues 737–747 and 823–832; these read ESGESAPDEGG and VPEEGSEDEL.

The protein belongs to the ATG9 family. Homotrimer; forms a homotrimer with a central pore that forms a path between the two membrane leaflets. Interacts (via cytoplasmic its C-terminus) with ATG2A. Interacts with SUPT20H. Interacts (via the tyrosine-based sorting signal motif) with AP4M1; promoting association with the AP-4 complex. Interacts with ARFIP1 and ARFIP2. Interacts with PI4K2A and PI4KB. Interacts with ATG4A; the interaction is direct and promotes ATG9A trafficking. In terms of processing, ufmylated in a DDRGK1 dependent manner.

The protein localises to the preautophagosomal structure membrane. It is found in the cytoplasmic vesicle. The protein resides in the autophagosome membrane. Its subcellular location is the golgi apparatus. It localises to the trans-Golgi network membrane. The protein localises to the late endosome membrane. It is found in the recycling endosome membrane. The protein resides in the endoplasmic reticulum membrane. Its subcellular location is the mitochondrion membrane. The catalysed reaction is a 1,2-diacyl-sn-glycero-3-phosphocholine(in) = a 1,2-diacyl-sn-glycero-3-phosphocholine(out). It carries out the reaction a 1,2-diacyl-sn-glycero-3-phospho-L-serine(in) = a 1,2-diacyl-sn-glycero-3-phospho-L-serine(out). It catalyses the reaction a 1,2-diacyl-sn-glycero-3-phosphoethanolamine(in) = a 1,2-diacyl-sn-glycero-3-phosphoethanolamine(out). Phospholipid scramblase involved in autophagy by mediating autophagosomal membrane expansion. Cycles between the preautophagosomal structure/phagophore assembly site (PAS) and the cytoplasmic vesicle pool and supplies membrane for the growing autophagosome. Lipid scramblase activity plays a key role in preautophagosomal structure/phagophore assembly by distributing the phospholipids that arrive through ATG2 (ATG2A or ATG2B) from the cytoplasmic to the luminal leaflet of the bilayer, thereby driving autophagosomal membrane expansion. Also required to supply phosphatidylinositol 4-phosphate to the autophagosome initiation site by recruiting the phosphatidylinositol 4-kinase beta (PI4KB) in a process dependent on ARFIP2, but not ARFIP1. In addition to autophagy, also plays a role in necrotic cell death. This chain is Autophagy-related protein 9A, found in Pongo abelii (Sumatran orangutan).